Consider the following 256-residue polypeptide: POU domain class 2-associating factor 1 (256 aa).

A disordered region spans residues 1–24; that stretch reads MLWQKSTAPEQAPAPPRPYQGVRV. Residues 16 to 38 form the OCA domain; the sequence is PRPYQGVRVKEPVKELLRRKRGH.

It belongs to the POU2AF family. As to quaternary structure, interacts with POU2F1/OCT1 and POU2F2/OCT2; the interaction increases POU2F1 and POU2F2 transactivation activity. Ubiquitinated; mediated by SIAH1 or SIAH2 and leading to its subsequent proteasomal degradation. In terms of tissue distribution, B-cell specific.

The protein localises to the nucleus. In terms of biological role, transcriptional coactivator that specifically associates with either POU2F1/OCT1 or POU2F2/OCT2. It boosts the POU2F1/OCT1 mediated promoter activity and to a lesser extent, that of POU2F2/OCT2. It recognizes the POU domains of POU2F1/OCT1 and POU2F2/OCT2. It is essential for the response of B-cells to antigens and required for the formation of germinal centers. Regulates IL6 expression in B cells as POU2F2/OCT2 coactivator. The chain is POU domain class 2-associating factor 1 from Mus musculus (Mouse).